The primary structure comprises 50 residues: Protein PsbN (50 aa).

The helical transmembrane segment at 14-34 threads the bilayer; that stretch reads IAVTILALLLALTGFGLWTAF.

This sequence belongs to the PsbN family.

The protein localises to the cellular thylakoid membrane. Its function is as follows. May play a role in photosystem I and II biogenesis. This is Protein PsbN from Prochlorococcus marinus (strain MIT 9301).